Reading from the N-terminus, the 209-residue chain is Thiamine-phosphate synthase (209 aa).

Residues 38–42 and asparagine 70 contribute to the 4-amino-2-methyl-5-(diphosphooxymethyl)pyrimidine site; that span reads QLREK. Mg(2+) contacts are provided by aspartate 71 and aspartate 90. Position 109 (serine 109) interacts with 4-amino-2-methyl-5-(diphosphooxymethyl)pyrimidine. 135-137 contributes to the 2-[(2R,5Z)-2-carboxy-4-methylthiazol-5(2H)-ylidene]ethyl phosphate binding site; that stretch reads TPT. Lysine 138 provides a ligand contact to 4-amino-2-methyl-5-(diphosphooxymethyl)pyrimidine. 2-[(2R,5Z)-2-carboxy-4-methylthiazol-5(2H)-ylidene]ethyl phosphate is bound by residues glycine 166 and 186–187; that span reads IS.

This sequence belongs to the thiamine-phosphate synthase family. Requires Mg(2+) as cofactor.

It carries out the reaction 2-[(2R,5Z)-2-carboxy-4-methylthiazol-5(2H)-ylidene]ethyl phosphate + 4-amino-2-methyl-5-(diphosphooxymethyl)pyrimidine + 2 H(+) = thiamine phosphate + CO2 + diphosphate. The enzyme catalyses 2-(2-carboxy-4-methylthiazol-5-yl)ethyl phosphate + 4-amino-2-methyl-5-(diphosphooxymethyl)pyrimidine + 2 H(+) = thiamine phosphate + CO2 + diphosphate. It catalyses the reaction 4-methyl-5-(2-phosphooxyethyl)-thiazole + 4-amino-2-methyl-5-(diphosphooxymethyl)pyrimidine + H(+) = thiamine phosphate + diphosphate. Its pathway is cofactor biosynthesis; thiamine diphosphate biosynthesis; thiamine phosphate from 4-amino-2-methyl-5-diphosphomethylpyrimidine and 4-methyl-5-(2-phosphoethyl)-thiazole: step 1/1. Condenses 4-methyl-5-(beta-hydroxyethyl)thiazole monophosphate (THZ-P) and 2-methyl-4-amino-5-hydroxymethyl pyrimidine pyrophosphate (HMP-PP) to form thiamine monophosphate (TMP). The polypeptide is Thiamine-phosphate synthase (Syntrophomonas wolfei subsp. wolfei (strain DSM 2245B / Goettingen)).